We begin with the raw amino-acid sequence, 176 residues long: Inner membrane-spanning protein YciB (176 aa).

5 helical membrane passes run 24-44 (TATA…AFRH), 49-69 (PMLW…LVLH), 76-96 (WKPT…QLAF), 119-139 (LSVV…FVAY), and 149-169 (FKLF…SLWL).

Belongs to the YciB family.

Its subcellular location is the cell inner membrane. Functionally, plays a role in cell envelope biogenesis, maintenance of cell envelope integrity and membrane homeostasis. The chain is Inner membrane-spanning protein YciB from Paraburkholderia phytofirmans (strain DSM 17436 / LMG 22146 / PsJN) (Burkholderia phytofirmans).